Consider the following 273-residue polypeptide: Probable ribosomal RNA small subunit methyltransferase A (273 aa).

Residues Asn23, Leu25, Gly50, Glu71, Asp95, and Asn110 each coordinate S-adenosyl-L-methionine.

This sequence belongs to the class I-like SAM-binding methyltransferase superfamily. rRNA adenine N(6)-methyltransferase family. RsmA subfamily.

Its subcellular location is the cytoplasm. In terms of biological role, specifically dimethylates two adjacent adenosines in the loop of a conserved hairpin near the 3'-end of 16S rRNA in the 30S particle. May play a critical role in biogenesis of 30S subunits. The polypeptide is Probable ribosomal RNA small subunit methyltransferase A (Pyrococcus furiosus (strain ATCC 43587 / DSM 3638 / JCM 8422 / Vc1)).